A 163-amino-acid polypeptide reads, in one-letter code: Large ribosomal subunit protein uL13m (163 aa).

The residue at position 2 (serine 2) is an N-acetylserine. The propeptide occupies 2–4; sequence SQK.

Belongs to the universal ribosomal protein uL13 family. As to quaternary structure, component of the mitochondrial large ribosomal subunit (mt-LSU). Mature yeast 74S mitochondrial ribosomes consist of a small (37S) and a large (54S) subunit. The 37S small subunit contains a 15S ribosomal RNA (15S mt-rRNA) and 34 different proteins. The 54S large subunit contains a 21S rRNA (21S mt-rRNA) and 46 different proteins.

It localises to the mitochondrion. In terms of biological role, component of the mitochondrial ribosome (mitoribosome), a dedicated translation machinery responsible for the synthesis of mitochondrial genome-encoded proteins, including at least some of the essential transmembrane subunits of the mitochondrial respiratory chain. The mitoribosomes are attached to the mitochondrial inner membrane and translation products are cotranslationally integrated into the membrane. This chain is Large ribosomal subunit protein uL13m (MRPL23), found in Saccharomyces cerevisiae (strain ATCC 204508 / S288c) (Baker's yeast).